The primary structure comprises 225 residues: Vacuolar protein sorting-associated protein 2 homolog 1 (225 aa).

Positions 13–54 form a coiled coil; sequence AELLRENKRMLDKSIREIERERQGLQTQEKKLINEIKKTAKQ.

Belongs to the SNF7 family. As to quaternary structure, component of the endosomal sorting required for transport complex III (ESCRT-III), composed at least of VPS2, VPS20, VPS24 and VPS32. Interacts with SKD1.

It is found in the endosome. Its function is as follows. Component of the ESCRT-III complex, which is required for multivesicular bodies (MVBs) formation and sorting of endosomal cargo proteins into MVBs. The ESCRT-III complex is probably involved in the concentration of MVB cargo. The protein is Vacuolar protein sorting-associated protein 2 homolog 1 (VPS2.1) of Arabidopsis thaliana (Mouse-ear cress).